Consider the following 38-residue polypeptide: Photosystem II reaction center protein L (38 aa).

The chain crosses the membrane as a helical span at residues 17-37 (SLYWGLLLIFVLAVLFSNYFF).

This sequence belongs to the PsbL family. As to quaternary structure, PSII is composed of 1 copy each of membrane proteins PsbA, PsbB, PsbC, PsbD, PsbE, PsbF, PsbH, PsbI, PsbJ, PsbK, PsbL, PsbM, PsbT, PsbX, PsbY, PsbZ, Psb30/Ycf12, at least 3 peripheral proteins of the oxygen-evolving complex and a large number of cofactors. It forms dimeric complexes.

It is found in the plastid. It localises to the chloroplast thylakoid membrane. In terms of biological role, one of the components of the core complex of photosystem II (PSII). PSII is a light-driven water:plastoquinone oxidoreductase that uses light energy to abstract electrons from H(2)O, generating O(2) and a proton gradient subsequently used for ATP formation. It consists of a core antenna complex that captures photons, and an electron transfer chain that converts photonic excitation into a charge separation. This subunit is found at the monomer-monomer interface and is required for correct PSII assembly and/or dimerization. The protein is Photosystem II reaction center protein L of Oenothera argillicola (Appalachian evening primrose).